The sequence spans 954 residues: Leucine--tRNA ligase (954 aa).

Residues 67–78 carry the 'HIGH' region motif; it reads PYPSGAGLHVGH. The 'KMSKS' region signature appears at 729–733; the sequence is KMGKS. Lys-732 serves as a coordination point for ATP.

Belongs to the class-I aminoacyl-tRNA synthetase family.

Its subcellular location is the cytoplasm. It catalyses the reaction tRNA(Leu) + L-leucine + ATP = L-leucyl-tRNA(Leu) + AMP + diphosphate. The protein is Leucine--tRNA ligase of Salinispora tropica (strain ATCC BAA-916 / DSM 44818 / JCM 13857 / NBRC 105044 / CNB-440).